The following is a 1213-amino-acid chain: DNA-directed RNA polymerase subunit beta' (1213 aa).

4 residues coordinate Zn(2+): Cys60, Cys62, Cys75, and Cys78. Positions 450, 452, and 454 each coordinate Mg(2+). Zn(2+)-binding residues include Cys819, Cys893, Cys900, and Cys903.

Belongs to the RNA polymerase beta' chain family. The RNAP catalytic core consists of 2 alpha, 1 beta, 1 beta' and 1 omega subunit. When a sigma factor is associated with the core the holoenzyme is formed, which can initiate transcription. Requires Mg(2+) as cofactor. Zn(2+) serves as cofactor.

The catalysed reaction is RNA(n) + a ribonucleoside 5'-triphosphate = RNA(n+1) + diphosphate. Functionally, DNA-dependent RNA polymerase catalyzes the transcription of DNA into RNA using the four ribonucleoside triphosphates as substrates. This chain is DNA-directed RNA polymerase subunit beta', found in Streptococcus pyogenes serotype M4 (strain MGAS10750).